A 304-amino-acid chain; its full sequence is Methionyl-tRNA formyltransferase (304 aa).

109 to 112 (SDLP) is a binding site for (6S)-5,6,7,8-tetrahydrofolate.

It belongs to the Fmt family.

It catalyses the reaction L-methionyl-tRNA(fMet) + (6R)-10-formyltetrahydrofolate = N-formyl-L-methionyl-tRNA(fMet) + (6S)-5,6,7,8-tetrahydrofolate + H(+). Attaches a formyl group to the free amino group of methionyl-tRNA(fMet). The formyl group appears to play a dual role in the initiator identity of N-formylmethionyl-tRNA by promoting its recognition by IF2 and preventing the misappropriation of this tRNA by the elongation apparatus. The protein is Methionyl-tRNA formyltransferase of Rickettsia bellii (strain RML369-C).